The primary structure comprises 84 residues: uncharacterized protein (84 aa).

This protein may be involved in virus assembly. This is an uncharacterized protein from Saccharolobus solfataricus (Sulfolobus solfataricus).